The chain runs to 604 residues: Aspartate--tRNA(Asp/Asn) ligase (604 aa).

E175 is an L-aspartate binding site. The interval 199 to 202 (QMFK) is aspartate. L-aspartate contacts are provided by R221 and H451. 221-223 (RDE) provides a ligand contact to ATP. Position 485 (E485) interacts with ATP. R492 contributes to the L-aspartate binding site. An ATP-binding site is contributed by 537-540 (GIDR).

Belongs to the class-II aminoacyl-tRNA synthetase family. Type 1 subfamily. Homodimer.

It is found in the cytoplasm. It catalyses the reaction tRNA(Asx) + L-aspartate + ATP = L-aspartyl-tRNA(Asx) + AMP + diphosphate. Functionally, aspartyl-tRNA synthetase with relaxed tRNA specificity since it is able to aspartylate not only its cognate tRNA(Asp) but also tRNA(Asn). Reaction proceeds in two steps: L-aspartate is first activated by ATP to form Asp-AMP and then transferred to the acceptor end of tRNA(Asp/Asn). This chain is Aspartate--tRNA(Asp/Asn) ligase, found in Erythrobacter litoralis (strain HTCC2594).